We begin with the raw amino-acid sequence, 388 residues long: Beta-1,4-galactosyltransferase 5 (388 aa).

At 1–14 (MRARRGLLRLPRRS) the chain is on the cytoplasmic side. Residues 15–35 (LLAALFFFSLSSSLLYFVYVA) traverse the membrane as a helical; Signal-anchor for type II membrane protein segment. The Lumenal portion of the chain corresponds to 36-388 (PGIVNTYLFM…TPELAQVNEY (353 aa)). N-linked (GlcNAc...) asparagine glycosylation is found at Asn77, Asn81, Asn90, Asn111, and Asn128. An intrachain disulfide couples Cys114 to Cys158. UDP-alpha-D-galactose-binding positions include 169–173 (PFRNR), 208–210 (FNR), 235–236 (VD), Tyr264, and Trp296. Residues Cys229 and Cys248 are joined by a disulfide bond. Residue Asp236 coordinates Mn(2+). 298–301 (GEDD) contributes to the N-acetyl-D-glucosamine binding site. His329 provides a ligand contact to Mn(2+). Residue 329–330 (HH) coordinates UDP-alpha-D-galactose. Arg340 serves as a coordination point for N-acetyl-D-glucosamine. 2 N-linked (GlcNAc...) asparagine glycosylation sites follow: Asn364 and Asn373.

It belongs to the glycosyltransferase 7 family. Mn(2+) serves as cofactor. Ubiquitously expressed.

The protein localises to the golgi apparatus. It localises to the golgi stack membrane. It carries out the reaction a beta-D-glucosyl-(1&lt;-&gt;1')-N-acylsphing-4-enine + UDP-alpha-D-galactose = a beta-D-Gal-(1-&gt;4)-beta-D-Glc-(1&lt;-&gt;1)-Cer(d18:1(4E)) + UDP + H(+). It functions in the pathway protein modification; protein glycosylation. Its pathway is sphingolipid metabolism. Functionally, catalyzes the synthesis of lactosylceramide (LacCer) via the transfer of galactose from UDP-galactose to glucosylceramide (GlcCer). LacCer is the starting point in the biosynthesis of all gangliosides (membrane-bound glycosphingolipids) which play pivotal roles in the CNS including neuronal maturation and axonal and myelin formation. Plays a role in the glycosylation of BMPR1A and regulation of its protein stability. Essential for extraembryonic development during early embryogenesis. In Homo sapiens (Human), this protein is Beta-1,4-galactosyltransferase 5.